Reading from the N-terminus, the 339-residue chain is Dihydroorotate dehydrogenase (quinone) (339 aa).

FMN is bound by residues 61 to 65 (AGLDK) and T85. K65 is a substrate binding site. 110–114 (NRMGF) is a substrate binding site. Residues N138 and N171 each contribute to the FMN site. Substrate is bound at residue N171. Catalysis depends on S174, which acts as the Nucleophile. N176 lines the substrate pocket. 2 residues coordinate FMN: K216 and T244. Position 245–246 (245–246 (NT)) interacts with substrate. FMN is bound by residues G267, G296, and 317–318 (YS).

Belongs to the dihydroorotate dehydrogenase family. Type 2 subfamily. As to quaternary structure, monomer. The cofactor is FMN.

The protein localises to the cell membrane. The catalysed reaction is (S)-dihydroorotate + a quinone = orotate + a quinol. The protein operates within pyrimidine metabolism; UMP biosynthesis via de novo pathway; orotate from (S)-dihydroorotate (quinone route): step 1/1. Catalyzes the conversion of dihydroorotate to orotate with quinone as electron acceptor. The protein is Dihydroorotate dehydrogenase (quinone) of Saccharophagus degradans (strain 2-40 / ATCC 43961 / DSM 17024).